Reading from the N-terminus, the 442-residue chain is Trigger factor (442 aa).

Residues G176–P259 form the PPIase FKBP-type domain.

Belongs to the FKBP-type PPIase family. Tig subfamily.

The protein resides in the cytoplasm. It carries out the reaction [protein]-peptidylproline (omega=180) = [protein]-peptidylproline (omega=0). Its function is as follows. Involved in protein export. Acts as a chaperone by maintaining the newly synthesized protein in an open conformation. Functions as a peptidyl-prolyl cis-trans isomerase. This is Trigger factor from Chlamydia trachomatis serovar L2 (strain ATCC VR-902B / DSM 19102 / 434/Bu).